The primary structure comprises 923 residues: Helicase POLQ-like (923 aa).

The disordered stretch occupies residues 1–84 (MNRTPIRRCK…STVTPIQQKI (84 aa)). A compositionally biased stretch (low complexity) spans 43–55 (STSPQSPSSSTEN). Residues 178 to 349 (DKRLLDGENC…ALRAFVYSTN (172 aa)) enclose the Helicase ATP-binding domain. 191-198 (LPTGAGKT) lines the ATP pocket. Positions 295–298 (DELH) match the DEAH box motif. One can recognise a Helicase C-terminal domain in the interval 392–596 (GICQLLAKLI…CVVLKLAENI (205 aa)).

The protein belongs to the helicase family. SKI2 subfamily.

It is found in the nucleus. The protein localises to the chromosome. It carries out the reaction Couples ATP hydrolysis with the unwinding of duplex DNA by translocating in the 3'-5' direction.. The enzyme catalyses ATP + H2O = ADP + phosphate + H(+). In terms of biological role, single-stranded 3'-5' DNA helicase that plays a key role in homology-driven double-strand break (DSB) repair. Involved in different DSB repair mechanisms that are guided by annealing of extensive stretches of complementary bases at break ends, such as microhomology-mediated end-joining (MMEJ), single-strand annealing (SSA) or synthesis-dependent strand annealing (SDSA). In Caenorhabditis elegans, this protein is Helicase POLQ-like.